Here is a 398-residue protein sequence, read N- to C-terminus: Tyrosine--tRNA ligase (398 aa).

The 'HIGH' region motif lies at 42–51 (PTAPDLHLGH). The 'KMSKS' region signature appears at 226-230 (KMSKS). Lysine 229 is a binding site for ATP. Residues 341–397 (AFLEAAGLVKSRGEAKRLIKEGALSVDGVRCDDANSPLASGEYVIKLGKKRFLRLTV) form the S4 RNA-binding domain.

It belongs to the class-I aminoacyl-tRNA synthetase family. TyrS type 2 subfamily. Homodimer.

The protein localises to the cytoplasm. It carries out the reaction tRNA(Tyr) + L-tyrosine + ATP = L-tyrosyl-tRNA(Tyr) + AMP + diphosphate + H(+). Its function is as follows. Catalyzes the attachment of tyrosine to tRNA(Tyr) in a two-step reaction: tyrosine is first activated by ATP to form Tyr-AMP and then transferred to the acceptor end of tRNA(Tyr). This is Tyrosine--tRNA ligase from Nitratidesulfovibrio vulgaris (strain ATCC 29579 / DSM 644 / CCUG 34227 / NCIMB 8303 / VKM B-1760 / Hildenborough) (Desulfovibrio vulgaris).